The following is a 148-amino-acid chain: Large ribosomal subunit protein uL15 (148 aa).

The segment covering 1–28 has biased composition (basic residues); that stretch reads MIRRRKKVRKLRGSHTHGWGCKKKHRGG. Positions 1–43 are disordered; it reads MIRRRKKVRKLRGSHTHGWGCKKKHRGGGSKGGRGMAGTGKRK. Residues 29–38 are compositionally biased toward gly residues; that stretch reads GSKGGRGMAG.

It belongs to the universal ribosomal protein uL15 family. As to quaternary structure, part of the 50S ribosomal subunit.

Binds to the 23S rRNA. This is Large ribosomal subunit protein uL15 from Thermococcus kodakarensis (strain ATCC BAA-918 / JCM 12380 / KOD1) (Pyrococcus kodakaraensis (strain KOD1)).